The following is a 133-amino-acid chain: Large ribosomal subunit protein bL17 (133 aa).

This sequence belongs to the bacterial ribosomal protein bL17 family. Part of the 50S ribosomal subunit. Contacts protein L32.

In Pseudoalteromonas translucida (strain TAC 125), this protein is Large ribosomal subunit protein bL17.